The chain runs to 354 residues: Guanine nucleotide-binding protein G(t) subunit alpha-2 (354 aa).

A disordered region spans residues 1–27 (MGSGASAEDKELAKRSKELEKKLQEDA). Gly2 is lipidated: N-myristoyl glycine. Over residues 7–27 (AEDKELAKRSKELEKKLQEDA) the composition is skewed to basic and acidic residues. The G-alpha domain occupies 32-354 (KTVKLLLLGA…KENLKDCGLF (323 aa)). Residues 35–48 (KLLLLGAGESGKST) form a G1 motif region. GTP contacts are provided by residues 40-47 (GAGESGKS), 175-181 (LRSRVKT), 200-204 (DVGGQ), 269-272 (NKKD), and Ala326. Ser47 is a binding site for Mg(2+). Residues 173–181 (DVLRSRVKT) form a G2 motif region. An ADP-ribosylarginine; by cholera toxin modification is found at Arg178. Thr181 provides a ligand contact to Mg(2+). The interval 196-205 (FRMFDVGGQR) is G3 motif. Residues 265–272 (VLFLNKKD) are G4 motif. A G5 motif region spans residues 324 to 329 (TCATDT). The residue at position 351 (Cys351) is an ADP-ribosylcysteine; by pertussis toxin.

This sequence belongs to the G-alpha family. G(i/o/t/z) subfamily. G proteins are composed of 3 units; alpha, beta and gamma. The alpha chain contains the guanine nucleotide binding site. In terms of tissue distribution, retinal rod outer segment.

Its subcellular location is the cell projection. It is found in the cilium. The protein localises to the photoreceptor outer segment. It localises to the photoreceptor inner segment. Its function is as follows. Guanine nucleotide-binding proteins (G proteins) are involved as modulators or transducers in various transmembrane signaling systems. Transducin is an amplifier and one of the transducers of a visual impulse that performs the coupling between rhodopsin and cGMP-phosphodiesterase. The chain is Guanine nucleotide-binding protein G(t) subunit alpha-2 (GNAT2) from Homo sapiens (Human).